The primary structure comprises 199 residues: Oleosin 21.2 kDa (199 aa).

The span at Met-1–Phe-14 shows a compositional bias: basic and acidic residues. A disordered region spans residues Met-1 to Gly-31. Residue Ala-2 is modified to N-acetylalanine. Residues Ala-2 to Ser-56 are polar. Residues Gly-22 to Gly-31 show a composition bias toward gly residues. A run of 3 helical transmembrane segments spans residues Ser-51–Ala-71, Gly-72–Phe-92, and Ile-96–Phe-116. The interval Leu-57–Met-128 is hydrophobic. The tract at residues Lys-159 to Ala-199 is disordered. Residues Gln-172–Gln-193 show a composition bias toward basic and acidic residues.

Belongs to the oleosin family.

The protein resides in the lipid droplet. Its subcellular location is the membrane. May have a structural role to stabilize the lipid body during desiccation of the seed by preventing coalescence of the oil. Probably interacts with both lipid and phospholipid moieties of lipid bodies. May also provide recognition signals for specific lipase anchorage in lipolysis during seedling growth. The sequence is that of Oleosin 21.2 kDa from Arabidopsis thaliana (Mouse-ear cress).